Here is a 563-residue protein sequence, read N- to C-terminus: F-box/kelch-repeat protein At5g42350 (563 aa).

The F-box domain maps to 129 to 175 (YRKHVYLPDDILEMCLMRLPLTSLLNAHLVCKKWQSMANTQRFLQMR). 3 Kelch repeats span residues 184–231 (WLFL…SIHE), 232–282 (EIYI…ATEV), and 355–402 (VLIA…IICN).

This chain is F-box/kelch-repeat protein At5g42350, found in Arabidopsis thaliana (Mouse-ear cress).